A 270-amino-acid polypeptide reads, in one-letter code: 3-methyl-2-oxobutanoate hydroxymethyltransferase (270 aa).

Residues Asp-50 and Asp-89 each contribute to the Mg(2+) site. Residues 50 to 51, Asp-89, and Lys-118 each bind 3-methyl-2-oxobutanoate; that span reads DS. Glu-120 provides a ligand contact to Mg(2+). The Proton acceptor role is filled by Glu-187.

It belongs to the PanB family. As to quaternary structure, homodecamer; pentamer of dimers. Mg(2+) serves as cofactor.

Its subcellular location is the cytoplasm. The enzyme catalyses 3-methyl-2-oxobutanoate + (6R)-5,10-methylene-5,6,7,8-tetrahydrofolate + H2O = 2-dehydropantoate + (6S)-5,6,7,8-tetrahydrofolate. Its pathway is cofactor biosynthesis; (R)-pantothenate biosynthesis; (R)-pantoate from 3-methyl-2-oxobutanoate: step 1/2. Catalyzes the reversible reaction in which hydroxymethyl group from 5,10-methylenetetrahydrofolate is transferred onto alpha-ketoisovalerate to form ketopantoate. The sequence is that of 3-methyl-2-oxobutanoate hydroxymethyltransferase from Helicobacter pylori (strain Shi470).